Consider the following 176-residue polypeptide: Peptide methionine sulfoxide reductase B3 (176 aa).

The signal sequence occupies residues 1–26 (MNIVNSKILFLSFTLLLLLQSSIVES). The 122-residue stretch at 51–172 (DEEWRAILSP…NSVSLKFTPA (122 aa)) folds into the MsrB domain. The Zn(2+) site is built by Cys-90, Cys-93, Cys-136, and Cys-139. Cys-108 and Cys-161 are oxidised to a cystine. Residue Cys-161 is the Nucleophile of the active site.

This sequence belongs to the MsrB Met sulfoxide reductase family. Requires Zn(2+) as cofactor.

The protein resides in the endoplasmic reticulum. The catalysed reaction is L-methionyl-[protein] + [thioredoxin]-disulfide + H2O = L-methionyl-(R)-S-oxide-[protein] + [thioredoxin]-dithiol. In terms of biological role, catalyzes the reduction of methionine sulfoxide (MetSO) to methionine in proteins. Plays a protective role against oxidative stress by restoring activity to proteins that have been inactivated by methionine oxidation. Involved in cold tolerance. Eliminates MetSO and reactive oxygen species that accumulate at the ER during cold acclimation. MSRB family specifically reduces the MetSO R-enantiomer. In Arabidopsis thaliana (Mouse-ear cress), this protein is Peptide methionine sulfoxide reductase B3 (MSRB3).